Reading from the N-terminus, the 148-residue chain is SsrA-binding protein (148 aa).

The segment at 128–148 (ESIAKKDQERNLKREFKNNNR) is disordered.

The protein belongs to the SmpB family.

The protein localises to the cytoplasm. In terms of biological role, required for rescue of stalled ribosomes mediated by trans-translation. Binds to transfer-messenger RNA (tmRNA), required for stable association of tmRNA with ribosomes. tmRNA and SmpB together mimic tRNA shape, replacing the anticodon stem-loop with SmpB. tmRNA is encoded by the ssrA gene; the 2 termini fold to resemble tRNA(Ala) and it encodes a 'tag peptide', a short internal open reading frame. During trans-translation Ala-aminoacylated tmRNA acts like a tRNA, entering the A-site of stalled ribosomes, displacing the stalled mRNA. The ribosome then switches to translate the ORF on the tmRNA; the nascent peptide is terminated with the 'tag peptide' encoded by the tmRNA and targeted for degradation. The ribosome is freed to recommence translation, which seems to be the essential function of trans-translation. In Fusobacterium nucleatum subsp. nucleatum (strain ATCC 25586 / DSM 15643 / BCRC 10681 / CIP 101130 / JCM 8532 / KCTC 2640 / LMG 13131 / VPI 4355), this protein is SsrA-binding protein.